A 195-amino-acid chain; its full sequence is NADH-quinone oxidoreductase subunit I (195 aa).

4Fe-4S ferredoxin-type domains lie at 44–74 (LNRYADGLEKCIGCELCAWACPADAIYVEGA) and 90–119 (QVYQINYLRCIGCGLCVEACPTRALTMTNE). Cys54, Cys57, Cys60, Cys64, Cys99, Cys102, Cys105, and Cys109 together coordinate [4Fe-4S] cluster. The tract at residues 145–195 (MTAPPHALRPGTTQDDYYRGDITAVPEQAAPEQAAPEQPAPEREPNPETEK) is disordered. A compositionally biased stretch (low complexity) spans 168–181 (AVPEQAAPEQAAPE). Residues 184–195 (APEREPNPETEK) are compositionally biased toward basic and acidic residues.

The protein belongs to the complex I 23 kDa subunit family. In terms of assembly, NDH-1 is composed of 14 different subunits. Subunits NuoA, H, J, K, L, M, N constitute the membrane sector of the complex. [4Fe-4S] cluster is required as a cofactor.

It is found in the cell membrane. The catalysed reaction is a quinone + NADH + 5 H(+)(in) = a quinol + NAD(+) + 4 H(+)(out). Functionally, NDH-1 shuttles electrons from NADH, via FMN and iron-sulfur (Fe-S) centers, to quinones in the respiratory chain. The immediate electron acceptor for the enzyme in this species is believed to be ubiquinone. Couples the redox reaction to proton translocation (for every two electrons transferred, four hydrogen ions are translocated across the cytoplasmic membrane), and thus conserves the redox energy in a proton gradient. The polypeptide is NADH-quinone oxidoreductase subunit I (Rhodococcus erythropolis (strain PR4 / NBRC 100887)).